The primary structure comprises 276 residues: NH(3)-dependent NAD(+) synthetase (276 aa).

ATP is bound at residue 43–50; it reads GISGGVDS. Residue Asp-49 coordinates Mg(2+). Arg-146 is a deamido-NAD(+) binding site. Thr-166 lines the ATP pocket. Glu-171 is a binding site for Mg(2+). 2 residues coordinate deamido-NAD(+): Lys-179 and Asp-186. 2 residues coordinate ATP: Lys-195 and Thr-217. 266-267 is a binding site for deamido-NAD(+); sequence HK.

It belongs to the NAD synthetase family. In terms of assembly, homodimer.

The enzyme catalyses deamido-NAD(+) + NH4(+) + ATP = AMP + diphosphate + NAD(+) + H(+). Its pathway is cofactor biosynthesis; NAD(+) biosynthesis; NAD(+) from deamido-NAD(+) (ammonia route): step 1/1. In terms of biological role, catalyzes the ATP-dependent amidation of deamido-NAD to form NAD. Uses ammonia as a nitrogen source. This is NH(3)-dependent NAD(+) synthetase from Vibrio parahaemolyticus serotype O3:K6 (strain RIMD 2210633).